Here is a 331-residue protein sequence, read N- to C-terminus: Tagatose 1,6-diphosphate aldolase 2 (331 aa).

The protein belongs to the aldolase LacD family.

The enzyme catalyses D-tagatofuranose 1,6-bisphosphate = D-glyceraldehyde 3-phosphate + dihydroxyacetone phosphate. It participates in carbohydrate metabolism; D-tagatose 6-phosphate degradation; D-glyceraldehyde 3-phosphate and glycerone phosphate from D-tagatose 6-phosphate: step 2/2. The sequence is that of Tagatose 1,6-diphosphate aldolase 2 (lacD2) from Enterococcus faecalis (strain ATCC 700802 / V583).